The sequence spans 158 residues: Transcription elongation factor GreA (158 aa).

The protein belongs to the GreA/GreB family.

In terms of biological role, necessary for efficient RNA polymerase transcription elongation past template-encoded arresting sites. The arresting sites in DNA have the property of trapping a certain fraction of elongating RNA polymerases that pass through, resulting in locked ternary complexes. Cleavage of the nascent transcript by cleavage factors such as GreA or GreB allows the resumption of elongation from the new 3'terminus. GreA releases sequences of 2 to 3 nucleotides. The polypeptide is Transcription elongation factor GreA (Ruthia magnifica subsp. Calyptogena magnifica).